The sequence spans 527 residues: Matrix metalloproteinase-19 (527 aa).

Positions 1 to 18 are cleaved as a signal peptide; that stretch reads MDWQQLWLAFLLPMTVSG. The propeptide occupies 19-98; that stretch reads RALGPTEKEA…EDPFNQKSLK (80 aa). Residues 84–91 carry the Cysteine switch motif; that stretch reads PRCGLEDP. Residue C86 coordinates Zn(2+). An N-linked (GlcNAc...) asparagine glycan is attached at N109. H213 serves as a coordination point for Zn(2+). Residue E214 is part of the active site. Zn(2+) is bound by residues H217 and H223. Hemopexin repeat units follow at residues 286 to 333, 334 to 372, 377 to 425, and 426 to 471; these read PNPC…WEGL, PGNLDAAVYSPRTRRTHFFKGNKVWRYVDFKMSPGFPMK, EPNL…FTGV, and PDRP…WMHC. C289 and C471 are joined by a disulfide. 2 N-linked (GlcNAc...) asparagine glycosylation sites follow: N464 and N479. Positions 473–500 are disordered; the sequence is SQTPDTNSSTGDVTPSTTDTVLGTTPST. D512 carries the GPI-anchor amidated aspartate lipid modification. A propeptide spans 513–527 (removed in mature form); it reads SASLSFSANVTLLGA. N-linked (GlcNAc...) asparagine glycosylation occurs at N521.

The protein belongs to the peptidase M10A family. Requires Zn(2+) as cofactor. Ca(2+) is required as a cofactor. In terms of processing, activated by autolytic cleavage after Lys-98. Post-translationally, tyrosine phosphorylated by PKDCC/VLK. As to expression, highly expressed in the liver. Expressed in the arterial tunica media of large blood vessels.

It localises to the cell membrane. The protein resides in the secreted. Its subcellular location is the extracellular space. It is found in the extracellular matrix. Its function is as follows. Endopeptidase that degrades various components of the extracellular matrix, such as aggrecan and cartilage oligomeric matrix protein (comp), during development, haemostasis and pathological conditions (arthritic disease). May also play a role in neovascularization or angiogenesis. Hydrolyzes collagen type IV, laminin, nidogen, nascin-C isoform, fibronectin, and type I gelatin. The polypeptide is Matrix metalloproteinase-19 (Mmp19) (Mus musculus (Mouse)).